Here is a 193-residue protein sequence, read N- to C-terminus: Probable type II restriction enzyme HpyAORF263P (193 aa).

The protein belongs to the BsaWI type II restriction endonuclease family.

The enzyme catalyses Endonucleolytic cleavage of DNA to give specific double-stranded fragments with terminal 5'-phosphates.. Its function is as follows. A P subtype probable restriction enzyme that recognizes the double-stranded sequence CCGG; the cleavage site is unknown. In Helicobacter pylori (strain ATCC 700392 / 26695) (Campylobacter pylori), this protein is Probable type II restriction enzyme HpyAORF263P.